The primary structure comprises 176 residues: NADH-quinone oxidoreductase subunit I (176 aa).

4Fe-4S ferredoxin-type domains lie at 47–77 (LTRDPDGEERCVACHLCSAACPVDCISMQAA) and 87–116 (AWFRINFSRCIFCGLCTEACPTLALQMTSE). Residues Cys-57, Cys-60, Cys-63, Cys-67, Cys-96, Cys-99, Cys-102, and Cys-106 each coordinate [4Fe-4S] cluster.

It belongs to the complex I 23 kDa subunit family. NDH-1 is composed of 14 different subunits. Subunits NuoA, H, J, K, L, M, N constitute the membrane sector of the complex. Requires [4Fe-4S] cluster as cofactor.

Its subcellular location is the cell inner membrane. The catalysed reaction is a quinone + NADH + 5 H(+)(in) = a quinol + NAD(+) + 4 H(+)(out). Functionally, NDH-1 shuttles electrons from NADH, via FMN and iron-sulfur (Fe-S) centers, to quinones in the respiratory chain. The immediate electron acceptor for the enzyme in this species is believed to be ubiquinone. Couples the redox reaction to proton translocation (for every two electrons transferred, four hydrogen ions are translocated across the cytoplasmic membrane), and thus conserves the redox energy in a proton gradient. In Syntrophotalea carbinolica (strain DSM 2380 / NBRC 103641 / GraBd1) (Pelobacter carbinolicus), this protein is NADH-quinone oxidoreductase subunit I.